A 270-amino-acid chain; its full sequence is Small ribosomal subunit protein uS2 (270 aa).

The span at 207–225 shows a compositional bias: acidic residues; that stretch reads EEPENTEEAAEEAATEEVV. The tract at residues 207-270 is disordered; the sequence is EEPENTEEAA…SESAPAPVAA (64 aa). Positions 226-258 are enriched in low complexity; the sequence is ETAAAEAAAATNADNWDVAPDAGAGAADWAATD.

This sequence belongs to the universal ribosomal protein uS2 family. In terms of assembly, component of the small ribosomal subunit. Mature ribosomes consist of a small (40S) and a large (60S) subunit. The 40S subunit contains about 33 different proteins and 1 molecule of RNA (18S). The 60S subunit contains about 49 different proteins and 3 molecules of RNA (25S, 5.8S and 5S). Interacts with RPS21.

The protein resides in the cytoplasm. In terms of biological role, required for the assembly and/or stability of the 40S ribosomal subunit. Required for the processing of the 20S rRNA-precursor to mature 18S rRNA in a late step of the maturation of 40S ribosomal subunits. This is Small ribosomal subunit protein uS2 from Yarrowia lipolytica (strain CLIB 122 / E 150) (Yeast).